The sequence spans 336 residues: Dihydroorotate dehydrogenase (quinone) (336 aa).

FMN contacts are provided by residues 62-66 (AGLDK) and Thr86. Lys66 provides a ligand contact to substrate. 111-115 (NRMGF) serves as a coordination point for substrate. 2 residues coordinate FMN: Asn139 and Asn172. Position 172 (Asn172) interacts with substrate. Ser175 functions as the Nucleophile in the catalytic mechanism. Substrate is bound at residue Asn177. Residues Lys217 and Thr245 each coordinate FMN. 246-247 (NT) serves as a coordination point for substrate. FMN contacts are provided by residues Gly268, Gly297, and 318-319 (YS).

It belongs to the dihydroorotate dehydrogenase family. Type 2 subfamily. In terms of assembly, monomer. Requires FMN as cofactor.

It localises to the cell membrane. The catalysed reaction is (S)-dihydroorotate + a quinone = orotate + a quinol. It functions in the pathway pyrimidine metabolism; UMP biosynthesis via de novo pathway; orotate from (S)-dihydroorotate (quinone route): step 1/1. Functionally, catalyzes the conversion of dihydroorotate to orotate with quinone as electron acceptor. This is Dihydroorotate dehydrogenase (quinone) from Klebsiella pneumoniae subsp. pneumoniae (strain ATCC 700721 / MGH 78578).